A 303-amino-acid chain; its full sequence is Diaminopimelate epimerase (303 aa).

Asparagine 14 contacts substrate. Residues 60-74 (PVSSAGATADAAAGR) show a composition bias toward low complexity. A disordered region spans residues 60–86 (PVSSAGATADAAAGRPPQPSAGRPPQP). Over residues 75-86 (PPQPSAGRPPQP) the composition is skewed to pro residues. Position 97 (asparagine 97) interacts with substrate. Cysteine 106 (proton donor) is an active-site residue. Residues 107–108 (GN), asparagine 178, asparagine 209, and 227–228 (ER) contribute to the substrate site. Cysteine 236 acts as the Proton acceptor in catalysis. Substrate is bound at residue 237-238 (GS).

The protein belongs to the diaminopimelate epimerase family. Homodimer.

Its subcellular location is the cytoplasm. The catalysed reaction is (2S,6S)-2,6-diaminopimelate = meso-2,6-diaminopimelate. Its pathway is amino-acid biosynthesis; L-lysine biosynthesis via DAP pathway; DL-2,6-diaminopimelate from LL-2,6-diaminopimelate: step 1/1. Catalyzes the stereoinversion of LL-2,6-diaminopimelate (L,L-DAP) to meso-diaminopimelate (meso-DAP), a precursor of L-lysine and an essential component of the bacterial peptidoglycan. This is Diaminopimelate epimerase from Acidothermus cellulolyticus (strain ATCC 43068 / DSM 8971 / 11B).